A 51-amino-acid chain; its full sequence is MARFPEAEARIFRKLVCMRCGATNPWGAKKCRKCGYKGLRPKAREPRGGGR.

Residues cysteine 17, cysteine 20, cysteine 31, and cysteine 34 each contribute to the Zn(2+) site.

It belongs to the eukaryotic ribosomal protein eL40 family. As to quaternary structure, part of the 50S ribosomal subunit. The cofactor is Zn(2+).

The sequence is that of Large ribosomal subunit protein eL40 from Thermococcus kodakarensis (strain ATCC BAA-918 / JCM 12380 / KOD1) (Pyrococcus kodakaraensis (strain KOD1)).